Consider the following 780-residue polypeptide: Cullin-1 (780 aa).

The Cullin neddylation domain occupies 710–771 (DRKSVISACI…EKEYMLRTEG (62 aa)). Residue lysine 724 forms a Glycyl lysine isopeptide (Lys-Gly) (interchain with G-Cter in NEDD8) linkage.

It belongs to the cullin family. In terms of assembly, component of an SCF (SKP1-CUL1-F-box protein) E3 ubiquitin ligase complex composed of cul-1, fsn-1, rpm-1 and skr-1. Interacts with Skp1-related proteins skr-1, skr-2, skr-3, skr-4, skr-7, skr-8, skr-9 and skr-10. Neddylated; which enhances the ubiquitination activity of SCF. In terms of tissue distribution, ubiquitous.

The protein localises to the cytoplasm. It functions in the pathway protein modification; protein ubiquitination. Its function is as follows. Probable core component of multiple cullin-RING-based SCF (SKP1-CUL1-F-box) E3 ubiquitin-protein ligase complexes which mediate the ubiquitination and subsequent proteasomal degradation of target proteins. As a scaffold protein may contribute to catalysis through positioning of the substrate and the ubiquitin-conjugating enzyme. Required for developmentally programmed transitions from the G1 phase of the cell cycle to the G0 phase or the apoptotic pathway. In Caenorhabditis elegans, this protein is Cullin-1 (cul-1).